Here is a 1388-residue protein sequence, read N- to C-terminus: Rho-associated protein kinase 2 (1388 aa).

Residues 1 to 24 form a disordered region; it reads MSRPPPTGKMPGAPEAVSGDGAGA. One can recognise a Protein kinase domain in the interval 92-354; it reads YDVVKVIGRG…VEEIKQHPFF (263 aa). ATP contacts are provided by residues 98-106 and lysine 121; that span reads IGRGAFGEV. Aspartate 214 acts as the Proton acceptor in catalysis. In terms of domain architecture, AGC-kinase C-terminal spans 357–425; sequence DQWNWDNIRE…YRENLLLSDS (69 aa). The tract at residues 363 to 784 is interaction with PPP1R12A; the sequence is NIRETAAPVV…INELLKQKDV (422 aa). An interaction with NPM1 region spans residues 373–420; that stretch reads PELSSDIDSSNFDDIEDDKGDVETFPIPKAFVGNQLPFIGFTYYRENL. Threonine 414 carries the phosphothreonine; by ROCK2 modification. Coiled-coil stretches lie at residues 439 to 1025 and 1053 to 1131; these read NEES…KQLL and DTDV…IGLD. An REM-1 domain is found at 497-573; that stretch reads TLRQLEREKA…LDETNALLRT (77 aa). A compositionally biased stretch (basic and acidic residues) spans 512–530; that stretch reads NAEYQRKADHEADKKRNLE. The interval 512–532 is disordered; that stretch reads NAEYQRKADHEADKKRNLEND. Position 722 is a phosphotyrosine; by SRC (tyrosine 722). One can recognise a RhoBD domain in the interval 979–1047; it reads TSDVANLANE…LAEIMNRKEP (69 aa). An RHOA binding region spans residues 979-1047; the sequence is TSDVANLANE…LAEIMNRKEP (69 aa). The residue at position 1137 (serine 1137) is a Phosphoserine. Residues 1150-1349 enclose the PH domain; it reads ESRLEGWLSL…WVSRLVKKIP (200 aa). Residue threonine 1212 is modified to Phosphothreonine. The Phorbol-ester/DAG-type zinc finger occupies 1260-1315; it reads GHEFIPTLYHFPTNCEACMKPLWHMFKPPPALECRRCHIKCHKDHMDKKEEIIAPC. A disordered region spans residues 1345–1388; sequence VKKIPKKPPAPDPFARSSPRTSMKIQQNQSIRRPSRQLAPNKPS. Phosphoserine occurs at positions 1362 and 1374. Polar residues predominate over residues 1362 to 1376; the sequence is SPRTSMKIQQNQSIR.

The protein belongs to the protein kinase superfamily. AGC Ser/Thr protein kinase family. Homodimer. Interacts with IRS1. Interacts with RAF1. Interacts with RHOA (activated by GTP). Interacts with RHOB and RHOC. Interacts with PPP1R12A. Interacts with EP300. Interacts with CHORDC1. Interacts with BRCA2. Interacts with NPM1; this interaction enhances ROCK2 activity. Interacts with SORL1. Interacts with PJVK. It depends on Mg(2+) as a cofactor. Autophosphorylated. Phosphorylation at Tyr-722 reduces its binding to RHOA and is crucial for focal adhesion dynamics. Dephosphorylation by PTPN11 stimulates its RHOA binding activity. In terms of processing, cleaved by granzyme B during apoptosis. This leads to constitutive activation of the kinase and membrane blebbing. In terms of tissue distribution, highly expressed in whole brain and in cerebellum, and at lower levels in heart and lung. Detected at low levels in skeletal muscle, spleen, liver, kidney and pancreas.

It localises to the cytoplasm. The protein resides in the cell membrane. Its subcellular location is the nucleus. It is found in the cytoskeleton. The protein localises to the microtubule organizing center. It localises to the centrosome. The catalysed reaction is L-seryl-[protein] + ATP = O-phospho-L-seryl-[protein] + ADP + H(+). It catalyses the reaction L-threonyl-[protein] + ATP = O-phospho-L-threonyl-[protein] + ADP + H(+). Activated by RHOA binding. Inhibited by Y-27632. Protein kinase which is a key regulator of actin cytoskeleton and cell polarity. Involved in regulation of smooth muscle contraction, actin cytoskeleton organization, stress fiber and focal adhesion formation, neurite retraction, cell adhesion and motility via phosphorylation of ADD1, BRCA2, CNN1, EZR, DPYSL2, EP300, MSN, MYL9/MLC2, NPM1, RDX, PPP1R12A and VIM. Phosphorylates SORL1 and IRF4. Acts as a negative regulator of VEGF-induced angiogenic endothelial cell activation. Positively regulates the activation of p42/MAPK1-p44/MAPK3 and of p90RSK/RPS6KA1 during myogenic differentiation. Plays an important role in the timely initiation of centrosome duplication. Inhibits keratinocyte terminal differentiation. May regulate closure of the eyelids and ventral body wall through organization of actomyosin bundles. Plays a critical role in the regulation of spine and synaptic properties in the hippocampus. Plays an important role in generating the circadian rhythm of the aortic myofilament Ca(2+) sensitivity and vascular contractility by modulating the myosin light chain phosphorylation. The sequence is that of Rho-associated protein kinase 2 (ROCK2) from Bos taurus (Bovine).